A 558-amino-acid polypeptide reads, in one-letter code: Eukaryotic translation initiation factor 3 subunit D (558 aa).

The RNA gate stretch occupies residues 296–310; the sequence is EFDLLTVNETSVEPP. A disordered region spans residues 534-558; it reads DNTFESEGEEEDSDEEEQVKDAFQR. Residues 537–551 show a composition bias toward acidic residues; that stretch reads FESEGEEEDSDEEEQ.

Belongs to the eIF-3 subunit D family. In terms of assembly, component of the eukaryotic translation initiation factor 3 (eIF-3) complex.

The protein resides in the cytoplasm. MRNA cap-binding component of the eukaryotic translation initiation factor 3 (eIF-3) complex, which is involved in protein synthesis of a specialized repertoire of mRNAs and, together with other initiation factors, stimulates binding of mRNA and methionyl-tRNAi to the 40S ribosome. The eIF-3 complex specifically targets and initiates translation of a subset of mRNAs involved in cell proliferation. In the eIF-3 complex, eif3d specifically recognizes and binds the 7-methylguanosine cap of a subset of mRNAs. The chain is Eukaryotic translation initiation factor 3 subunit D from Nasonia vitripennis (Parasitic wasp).